Reading from the N-terminus, the 395-residue chain is Probable peptidoglycan glycosyltransferase FtsW (395 aa).

The Cytoplasmic portion of the chain corresponds to 1–24; sequence MADLAAGVAERGPRLSLWSSLDQR. A helical membrane pass occupies residues 25–45; it reads LVWVVAATALLGLVMVASASI. Topologically, residues 46-62 are periplasmic; that stretch reads SMAEQATGDPFYFFKRQ. A helical transmembrane segment spans residues 63–83; the sequence is IFFALLGLGMALALLQIPLAT. Topologically, residues 84–86 are cytoplasmic; the sequence is WER. A helical membrane pass occupies residues 87–107; it reads AGPGLLLGALALLVLVLIPGV. At 108–116 the chain is on the periplasmic side; the sequence is GREVNGAVR. Residues 117-137 traverse the membrane as a helical segment; that stretch reads WIPLGVFNLQVAEVVKVLLAL. The Cytoplasmic segment spans residues 138–152; it reads YLAGFLVRRQQQLRT. A helical membrane pass occupies residues 153–173; the sequence is SMAAFLVPVLVSAACAFLLLL. Topologically, residues 174-178 are periplasmic; it reads QPDFG. Residues 179 to 199 form a helical membrane-spanning segment; that stretch reads TALMLMALAVGLLYLAGAPLW. Arg-200 is a topological domain (cytoplasmic). Residues 201-221 form a helical membrane-spanning segment; it reads FAALVGVLAAAAAALVVYSPY. Residues 222–276 lie on the Periplasmic side of the membrane; it reads RWQRVTAFMDPWSDPFNTGFQLTQSLIAIGRGDWLGVGLGGSVQKLFYLPEAHTD. The helical transmembrane segment at 277–297 threads the bilayer; sequence FVFSVLAEELGWLGVLAVVLL. The Cytoplasmic segment spans residues 298 to 316; sequence FSYIVWRAMAVGWQCHRHR. The helical transmembrane segment at 317 to 337 threads the bilayer; it reads LPFAGYLAWAVGLALGLQAFI. Over 338–352 the chain is Periplasmic; that stretch reads NMGVATGLLPTKGLT. The helical transmembrane segment at 353–373 threads the bilayer; it reads LPLFSYGGSSALATGAMVGLL. The Cytoplasmic segment spans residues 374–395; it reads LRCGYELAQARAEGRRPEEAAS.

The protein belongs to the SEDS family. FtsW subfamily.

It is found in the cell inner membrane. It catalyses the reaction [GlcNAc-(1-&gt;4)-Mur2Ac(oyl-L-Ala-gamma-D-Glu-L-Lys-D-Ala-D-Ala)](n)-di-trans,octa-cis-undecaprenyl diphosphate + beta-D-GlcNAc-(1-&gt;4)-Mur2Ac(oyl-L-Ala-gamma-D-Glu-L-Lys-D-Ala-D-Ala)-di-trans,octa-cis-undecaprenyl diphosphate = [GlcNAc-(1-&gt;4)-Mur2Ac(oyl-L-Ala-gamma-D-Glu-L-Lys-D-Ala-D-Ala)](n+1)-di-trans,octa-cis-undecaprenyl diphosphate + di-trans,octa-cis-undecaprenyl diphosphate + H(+). It participates in cell wall biogenesis; peptidoglycan biosynthesis. Functionally, peptidoglycan polymerase that is essential for cell division. The chain is Probable peptidoglycan glycosyltransferase FtsW from Halorhodospira halophila (strain DSM 244 / SL1) (Ectothiorhodospira halophila (strain DSM 244 / SL1)).